Consider the following 142-residue polypeptide: Galactose-6-phosphate isomerase subunit LacA (142 aa).

Belongs to the LacAB/RpiB family. In terms of assembly, heteromultimeric protein consisting of LacA and LacB.

The catalysed reaction is aldehydo-D-galactose 6-phosphate = keto-D-tagatose 6-phosphate. It participates in carbohydrate metabolism; D-galactose 6-phosphate degradation; D-tagatose 6-phosphate from D-galactose 6-phosphate: step 1/1. In Staphylococcus aureus, this protein is Galactose-6-phosphate isomerase subunit LacA.